The chain runs to 212 residues: Protein DEPP1 (212 aa).

3 disordered regions span residues 20–39 (EEML…SLDD), 49–79 (QPTS…GRPA), and 113–176 (QEKQ…SDLR). Basic and acidic residues predominate over residues 113-124 (QEKQPSQRDLPR).

As to expression, expressed in various tissues, including pancreas, placenta, ovary, testis and kidney.

It is found in the cytoplasm. It localises to the peroxisome. The protein localises to the mitochondrion. In terms of biological role, acts as a critical modulator of FOXO3-induced autophagy via increased cellular ROS. The protein is Protein DEPP1 of Homo sapiens (Human).